The primary structure comprises 367 residues: Germination protease (367 aa).

Residues 1-15 constitute a propeptide that is removed on maturation; sequence MKEPLDLSKYSVRTD.

The protein belongs to the peptidase A25 family. In terms of assembly, homotetramer. In terms of processing, autoproteolytically processed. The inactive tetrameric zymogen termed p46 autoprocesses to a smaller form termed p41, which is active only during spore germination.

The catalysed reaction is Endopeptidase action with P4 Glu or Asp, P1 preferably Glu &gt; Asp, P1' hydrophobic and P2' Ala.. In terms of biological role, initiates the rapid degradation of small, acid-soluble proteins during spore germination. The chain is Germination protease from Bacillus thuringiensis subsp. konkukian (strain 97-27).